Reading from the N-terminus, the 391-residue chain is Somatostatin receptor type 1 (391 aa).

A compositionally biased stretch (low complexity) spans 1 to 11 (MFPNGTASSPS). The tract at residues 1-49 (MFPNGTASSPSSPSPSPGSCGEGGGSRGPGAGAADGMEEPGRNASQNGT) is disordered. At 1–55 (MFPNGTASSPSSPSPSPGSCGEGGGSRGPGAGAADGMEEPGRNASQNGTLSEGQG) the chain is on the extracellular side. Residue Asn-4 is glycosylated (N-linked (GlcNAc...) asparagine). A compositionally biased stretch (gly residues) spans 20-33 (CGEGGGSRGPGAGA). Residues Asn-43 and Asn-47 are each glycosylated (N-linked (GlcNAc...) asparagine). The helical transmembrane segment at 56–83 (SAILISFIYSVVCLVGLCGNSMVIYVIL) threads the bilayer. Topologically, residues 84–93 (RYAKMKTATN) are cytoplasmic. The helical transmembrane segment at 94-119 (IYILNLAIADELLMLSVPFLVTSTLL) threads the bilayer. Topologically, residues 120–130 (RHWPFGALLCR) are extracellular. The cysteines at positions 129 and 207 are disulfide-linked. Residues 131–152 (LVLSVDAVNMFTSIYCLTVLSV) form a helical membrane-spanning segment. The Cytoplasmic portion of the chain corresponds to 153–174 (DRYVAVVHPIKAARYRRPTVAK). A helical transmembrane segment spans residues 175–195 (VVNLGVWVLSLLVILPIVVFS). Residues 196–218 (RTAANSDGTVACNMLMPEPAQRW) are Extracellular-facing. The chain crosses the membrane as a helical span at residues 219–243 (LVGFVLYTFLMGFLLPVGAICLCYV). Residues 244–269 (LIIAKMRMVALKAGWQQRKRSERKIT) lie on the Cytoplasmic side of the membrane. Residues 270–295 (LMVMMVVMVFVICWMPFYVVQLVNVF) form a helical membrane-spanning segment. At 296-302 (AEQDDAT) the chain is on the extracellular side. The chain crosses the membrane as a helical span at residues 303–326 (VSQLSVILGYANSCANPILYGFLS). Residues 327-391 (DNFKRSFQRI…GTCTSRITTL (65 aa)) lie on the Cytoplasmic side of the membrane. Residue Cys-338 is the site of S-palmitoyl cysteine attachment.

Belongs to the G-protein coupled receptor 1 family. Interacts with SKB1.

It localises to the cell membrane. Receptor for somatostatin with higher affinity for somatostatin-14 than -28. This receptor is coupled via pertussis toxin sensitive G proteins to inhibition of adenylyl cyclase. In addition it stimulates phosphotyrosine phosphatase and Na(+)/H(+) exchanger via pertussis toxin insensitive G proteins. The chain is Somatostatin receptor type 1 (SSTR1) from Canis lupus familiaris (Dog).